The sequence spans 296 residues: Nucleotide-binding protein SAG0531 (296 aa).

An ATP-binding site is contributed by 13–20 (GMSGAGKT). Residue 63-66 (DMRS) coordinates GTP.

Belongs to the RapZ-like family.

In terms of biological role, displays ATPase and GTPase activities. The chain is Nucleotide-binding protein SAG0531 from Streptococcus agalactiae serotype V (strain ATCC BAA-611 / 2603 V/R).